Here is a 557-residue protein sequence, read N- to C-terminus: TWiK family of potassium channels protein 7 (557 aa).

Disordered regions lie at residues 1–34 and 128–151; these read MTSSSRGYQRVDSSGDGGSLLMEEEGDNPHEALL and DKSGHEDIDDESDDESKDEDEEEE. Topologically, residues 1–165 are cytoplasmic; sequence MTSSSRGYQR…RKFAKLVLPH (165 aa). Positions 134–151 are enriched in acidic residues; sequence DIDDESDDESKDEDEEEE. Residues 166–186 traverse the membrane as a helical segment; that stretch reads VALVLLTCTYTVIGALIFYSV. 2 N-linked (GlcNAc...) asparagine glycosylation sites follow: Asn220 and Asn237. Positions 270–290 form an intramembrane region, pore-forming; the sequence is SIFFAVTVVTTIGYGNPVPVT. Residues 295–315 traverse the membrane as a helical segment; the sequence is IWCILFSLLGIPLTLVTIADL. The Cytoplasmic portion of the chain corresponds to 316–368; sequence GKFLSEHLVWLYGNYLKLKYLILSRHRKERREHVCEHCHSHGMGHDMNIEEKR. The helical transmembrane segment at 369–389 threads the bilayer; that stretch reads IPAFLVLAILIVYTAFGGVLM. The pore-forming intramembrane region spans 397–417; that stretch reads FFTSFYWSFITMTTVGFGDLM. A helical transmembrane segment spans residues 426–446; the sequence is IILLYIILGLAITTMCIDLVG. Residues 447–557 are Cytoplasmic-facing; the sequence is VQYIRKIHYF…SRYSLNRAFK (111 aa).

This sequence belongs to the two pore domain potassium channel (TC 1.A.1.8) family.

Its subcellular location is the membrane. This chain is TWiK family of potassium channels protein 7 (twk-7), found in Caenorhabditis elegans.